The sequence spans 214 residues: uncharacterized protein (214 aa).

Residues 1 to 24 form the signal peptide; sequence MKIWIKAICITSFVIQMSACSSSA. A TNase-like domain is found at 64–197; it reads ETVKGKVLHI…KEAKAGVWSI (134 aa). Catalysis depends on residues Arg-91, Glu-99, and Arg-142.

This is an uncharacterized protein from Bacillus anthracis.